A 234-amino-acid chain; its full sequence is MAKKVFKRLEKLFSKIQNDKAYGVEQGVEVVKSLASAKFDETVEVALRLGVDPRHADQMVRGAVVLPHGTGKKVRVAVFAKDIKQDEAKNAGADVVGGDDLAEEIKNGRIDFDMVIATPDMMAVVGKVGRILGPKGLMPNPKTGTVTMDIAKAVSNAKSGQVNFRVDKKGNVHAPIGKASFPEEKIKENMLELVKTINRLKPSSAKGKYIRNAALSLTMSPSVSLDAQELMDIK.

Belongs to the universal ribosomal protein uL1 family. In terms of assembly, part of the 50S ribosomal subunit.

In terms of biological role, binds directly to 23S rRNA. The L1 stalk is quite mobile in the ribosome, and is involved in E site tRNA release. Protein L1 is also a translational repressor protein, it controls the translation of the L11 operon by binding to its mRNA. Its function is as follows. Peptides originating from the N-terminal end of L1 have antibacterial activity against bacteria such as E.coli and B.megaterium and modest antifungal activities. Has no effect on H.pylori itself. Peptides are not hemolytic against mammalian cells. These peptides may be released in the stomach during altruistic lysis to kill other fast growing bacteria. In Helicobacter pylori (strain ATCC 700392 / 26695) (Campylobacter pylori), this protein is Large ribosomal subunit protein uL1.